Consider the following 1382-residue polypeptide: Hepatocyte growth factor receptor (1382 aa).

The N-terminal stretch at methionine 1–glycine 24 is a signal peptide. Topologically, residues glutamate 25–glycine 935 are extracellular. The Sema domain maps to lysine 27 to leucine 516. N-linked (GlcNAc...) asparagine glycosylation is present at asparagine 45. 4 cysteine pairs are disulfide-bonded: cysteine 95–cysteine 101, cysteine 98–cysteine 160, cysteine 133–cysteine 141, and cysteine 173–cysteine 176. Asparagine 106 carries N-linked (GlcNAc...) asparagine glycosylation. Residues asparagine 203 and asparagine 359 are each glycosylated (N-linked (GlcNAc...) asparagine). 2 cysteine pairs are disulfide-bonded: cysteine 299–cysteine 364 and cysteine 386–cysteine 398. 2 N-linked (GlcNAc...) asparagine glycosylation sites follow: asparagine 400 and asparagine 406. Cystine bridges form between cysteine 521–cysteine 539, cysteine 527–cysteine 562, cysteine 530–cysteine 546, and cysteine 542–cysteine 552. IPT/TIG domains lie at proline 564–valine 656, proline 658–arginine 740, and proline 743–valine 837. Threonine 583 is a glycosylation site (O-linked (Man) threonine). N-linked (GlcNAc...) asparagine glycosylation is found at asparagine 608 and asparagine 636. O-linked (Man) threonine glycosylation is found at threonine 677 and threonine 762. N-linked (GlcNAc...) asparagine glycosylation is found at asparagine 786 and asparagine 880. The helical transmembrane segment at leucine 936–tryptophan 956 threads the bilayer. Over leucine 957–glutamate 1379 the chain is Cytoplasmic. At serine 967 the chain carries Phosphoserine. Residue threonine 978 is modified to Phosphothreonine. Phosphoserine is present on residues serine 991, serine 998, and serine 1001. A Phosphotyrosine modification is found at tyrosine 1004. Residues valine 1079 to isoleucine 1346 enclose the Protein kinase domain. Residues isoleucine 1085–valine 1093 and lysine 1111 contribute to the ATP site. Catalysis depends on aspartate 1205, which acts as the Proton acceptor. Residues leucine 1213–threonine 1382 are interaction with RANBP9. Phosphotyrosine is present on tyrosine 1231. 2 positions are modified to phosphotyrosine; by autocatalysis: tyrosine 1235 and tyrosine 1236. Phosphothreonine is present on threonine 1290. The interval tryptophan 1321–valine 1360 is interaction with MUC20. Phosphotyrosine; by autocatalysis occurs at positions 1350 and 1357. Tyrosine 1366 carries the post-translational modification Phosphotyrosine.

This sequence belongs to the protein kinase superfamily. Tyr protein kinase family. In terms of assembly, heterodimer made of an alpha chain (50 kDa) and a beta chain (145 kDa) which are disulfide linked. Binds PLXNB1. Interacts when phosphorylated with downstream effectors including STAT3, PIK3R1, SRC, PCLG1, GRB2 and GAB1. Interacts with SPSB1, SPSB2 and SPSB4. Interacts with INPP5D/SHIP1. When phosphorylated at Tyr-1357, interacts with INPPL1/SHIP2. Interacts with RANBP9 and RANBP10, as well as SPSB1, SPSB2, SPSB3 and SPSB4. SPSB1 binding occurs in the presence and in the absence of HGF, however HGF treatment has a positive effect on this interaction. Interacts with MUC20; prevents interaction with GRB2 and suppresses hepatocyte growth factor-induced cell proliferation. Interacts with GRB10. Interacts with PTPN1 and PTPN2. Interacts with HSP90AA1 and HSP90AB1; the interaction suppresses MET kinase activity. Interacts with tensin TNS3. Interacts (when phosphorylated) with tensin TNS4 (via SH2 domain); the interaction increases MET protein stability by inhibiting MET endocytosis and subsequent lysosomal degradation. In terms of processing, autophosphorylated in response to ligand binding on Tyr-1235 and Tyr-1236 in the kinase domain leading to further phosphorylation of Tyr-1350 and Tyr-1357 in the C-terminal multifunctional docking site. Dephosphorylated by PTPRJ at Tyr-1350 and Tyr-1366. Dephosphorylated by PTPN1 and PTPN2. Ubiquitinated. Ubiquitination by CBL regulates the receptor stability and activity through proteasomal degradation. Post-translationally, O-mannosylation of IPT/TIG domains by TMEM260 is required for protein maturation. O-mannosylated residues are composed of single mannose glycans that are not elongated or modified. As to expression, expressed at highest levels in lung, liver and kidney, also expressed in stomach, intestine, spleen, testis and brain. Not expressed in heart or muscle.

It localises to the membrane. The enzyme catalyses L-tyrosyl-[protein] + ATP = O-phospho-L-tyrosyl-[protein] + ADP + H(+). In its inactive state, the C-terminal tail interacts with the catalytic domain and inhibits the kinase activity. Upon ligand binding, the C-terminal tail is displaced and becomes phosphorylated, thus increasing the kinase activity. Receptor tyrosine kinase that transduces signals from the extracellular matrix into the cytoplasm by binding to hepatocyte growth factor/HGF ligand. Regulates many physiological processes including proliferation, scattering, morphogenesis and survival. Ligand binding at the cell surface induces autophosphorylation of MET on its intracellular domain that provides docking sites for downstream signaling molecules. Following activation by ligand, interacts with the PI3-kinase subunit PIK3R1, PLCG1, SRC, GRB2, STAT3 or the adapter GAB1. Recruitment of these downstream effectors by MET leads to the activation of several signaling cascades including the RAS-ERK, PI3 kinase-AKT, or PLCgamma-PKC. The RAS-ERK activation is associated with the morphogenetic effects while PI3K/AKT coordinates prosurvival effects. During embryonic development, MET signaling plays a role in gastrulation, development and migration of muscles and neuronal precursors, angiogenesis and kidney formation. In adults, participates in wound healing as well as organ regeneration and tissue remodeling. Also promotes differentiation and proliferation of hematopoietic cells. This Rattus norvegicus (Rat) protein is Hepatocyte growth factor receptor (Met).